The sequence spans 355 residues: Apyrase apy-1 (355 aa).

Over 1-6 (MTQESN) the chain is Cytoplasmic. Residues 7–29 (SNFFNFLLFGFVTAIAFYSGTQF) traverse the membrane as a helical; Signal-anchor for type II membrane protein segment. Asn-30 carries an N-linked (GlcNAc...) asparagine glycan. At 30–355 (NKSSEQEEHI…PYKYEGIAFA (326 aa)) the chain is on the lumenal side. Residues Ser-119, Glu-166, and Glu-235 each contribute to the Ca(2+) site. An N-linked (GlcNAc...) asparagine glycan is attached at Asn-291. Glu-350 serves as a coordination point for Ca(2+).

Belongs to the apyrase family. It depends on Ca(2+) as a cofactor.

Its subcellular location is the endomembrane system. It carries out the reaction a ribonucleoside 5'-diphosphate + H2O = a ribonucleoside 5'-phosphate + phosphate + H(+). Hydrolyzes UDP and to a lesser extent GDP. By preventing the accumulation of NDP, may promote the reglucosylation of incompletely folded glycoproteins in the endoplasmic reticulum following the unfolded protein response. This Caenorhabditis elegans protein is Apyrase apy-1.